The sequence spans 179 residues: Cell division protein SepF (179 aa).

Positions L22–K55 are disordered. Positions T33–K55 are enriched in polar residues.

Belongs to the SepF family. Homodimer. Interacts with FtsZ.

It localises to the cytoplasm. In terms of biological role, cell division protein that is part of the divisome complex and is recruited early to the Z-ring. Probably stimulates Z-ring formation, perhaps through the cross-linking of FtsZ protofilaments. Its function overlaps with FtsA. In Streptococcus pneumoniae (strain Taiwan19F-14), this protein is Cell division protein SepF.